The sequence spans 745 residues: Fatty acid oxidation complex subunit alpha (745 aa).

The interval 47–209 is enoyl-CoA hydratase; sequence VNTLKAKFAE…KMGLVDDVVP (163 aa). The tract at residues 325 to 745 is 3-hydroxyacyl-CoA dehydrogenase; it reads RAIHRVGVLG…LDEAAITAHN (421 aa).

It in the N-terminal section; belongs to the enoyl-CoA hydratase/isomerase family. This sequence in the central section; belongs to the 3-hydroxyacyl-CoA dehydrogenase family. Heterotetramer of two alpha chains (FadJ) and two beta chains (FadI).

It is found in the cytoplasm. The catalysed reaction is a (3S)-3-hydroxyacyl-CoA = a (2E)-enoyl-CoA + H2O. It catalyses the reaction a 4-saturated-(3S)-3-hydroxyacyl-CoA = a (3E)-enoyl-CoA + H2O. It carries out the reaction a (3S)-3-hydroxyacyl-CoA + NAD(+) = a 3-oxoacyl-CoA + NADH + H(+). The enzyme catalyses (3S)-3-hydroxybutanoyl-CoA = (3R)-3-hydroxybutanoyl-CoA. It functions in the pathway lipid metabolism; fatty acid beta-oxidation. Catalyzes the formation of a hydroxyacyl-CoA by addition of water on enoyl-CoA. Also exhibits 3-hydroxyacyl-CoA epimerase and 3-hydroxyacyl-CoA dehydrogenase activities. This is Fatty acid oxidation complex subunit alpha from Yersinia enterocolitica serotype O:8 / biotype 1B (strain NCTC 13174 / 8081).